The sequence spans 300 residues: MASKPGDFDAVRKDIVSLLDQPEYDDGSAGPVLVRLAWHSAGTYDKSTDTGGSNGAGMRYEAEGGDPANAGLQNARQFLEPVKARHPWITYADLRTLAGVVAVRAMGGPEIPWRAGRTDFADDSRVPPRGRLPDATQGAAHVRDIFYRMGFDDREIVALSGAHSLGRCHPANSGFEGKWVNNPTRFSNQYFRLLLSEDWREKTVAGTGLKQFVAVDEVTGDELMMLPTDLSLTSDPVFARWVKVYRDDQDLFFADFAKVFDKLMELGIKRDAEGKVINKENVEGGYVSAPKKQGKIASKL.

The active-site Proton acceptor is the histidine 39. Disordered stretches follow at residues 44–64 (YDKSTDTGGSNGAGMRYEAEG) and 116–135 (GRTDFADDSRVPPRGRLPDA). The segment covering 116-126 (GRTDFADDSRV) has biased composition (basic and acidic residues). Histidine 163 lines the heme b pocket. Tryptophan 179 functions as the Tryptophan radical intermediate in the catalytic mechanism.

This sequence belongs to the peroxidase family. Cytochrome c peroxidase subfamily. Heme b is required as a cofactor.

Its function is as follows. Destroys radicals which are normally produced within the cells and which are toxic to biological systems. The chain is Putative heme-binding peroxidase from Pyricularia oryzae (strain 70-15 / ATCC MYA-4617 / FGSC 8958) (Rice blast fungus).